The primary structure comprises 874 residues: Rho GTPase-activating protein 42 (874 aa).

Residues 7 to 262 (EFSDSYLDSP…MKSANQDYRP (256 aa)) form the BAR domain. A coiled-coil region spans residues 225–261 (KQQLQFNLQNTRNNFESTRQEVERLMQRMKSANQDYR). The region spanning 265–374 (QWTMEGYLYV…WLEAMDGKEP (110 aa)) is the PH domain. Tyr-376 carries the phosphotyrosine modification. Residues 376-572 (YTLPAIISKK…ILIEHYEKIF (197 aa)) form the Rho-GAP domain. The disordered stretch occupies residues 575-720 (APDPSIPLPQ…GDVSPPIDLV (146 aa)). Positions 620-650 (DSYSSSPDSTPMGSIESLSSHSSEQNSTTKS) are enriched in low complexity. The span at 667–686 (TPSSSNGQKSLGLWTTSPES) shows a compositional bias: polar residues. Ser-683 carries the phosphoserine modification. Basic and acidic residues predominate over residues 687 to 697 (SSREDATKTDA). Residues 700-711 (DCQSVASVTSPG) show a composition bias toward polar residues. Phosphoserine is present on residues Ser-740, Ser-753, Ser-756, and Ser-811. Over residues 749–762 (SYSGSIQSLTSVGS) the composition is skewed to polar residues. Residues 749–777 (SYSGSIQSLTSVGSKETPKASPNPDLPPK) form a disordered region. The region spanning 816 to 874 (SSGRQAKAMYSCKAEHSHELSFPQGAIFSNVYPSVEPGWLKATYEGKTGLVPENYVVFL) is the SH3 domain. Phosphotyrosine is present on Tyr-870.

Highly and selectively expressed in smooth muscle cells.

Functionally, may influence blood pressure by functioning as a GTPase-activating protein for RHOA in vascular smooth muscle. This Homo sapiens (Human) protein is Rho GTPase-activating protein 42.